The chain runs to 374 residues: Nucleosome assembly protein 1;1 (374 aa).

Residues 26–80 adopt a coiled-coil conformation; sequence VNALKNKLQDITGKPTNVLECLSPNVRKRVEVLKEIQSQHDELEAKFYEERAVLE. The Nuclear export signal motif lies at 47–62; it reads LSPNVRKRVEVLKEIQ. A Nuclear localization signal motif is present at residues 223 to 228; it reads KKKPKK. Residues 299 to 339 are compositionally biased toward acidic residues; it reads AAEDDFADLEDDDDDDEEDDDDEDEEEEDDEDDEDEEDEDD. Positions 299–374 are disordered; that stretch reads AAEDDFADLE…GERPPECKQQ (76 aa). Residues 343 to 355 are compositionally biased toward basic residues; sequence KKKSSAVRKRGVR. C371 carries the post-translational modification Cysteine methyl ester. The S-farnesyl cysteine moiety is linked to residue C371. A propeptide spans 372-374 (removed in mature form); it reads KQQ.

This sequence belongs to the nucleosome assembly protein (NAP) family. Binds preferentially histones H4 and H1 in vitro. Interacts with CYCB1;1.

Its subcellular location is the nucleus. The protein resides in the cytoplasm. Functionally, may modulate chromatin structure by regulation of nucleosome assembly/disassembly. Could function together with B-type cyclins in the regulation of microtubule dynamics. The polypeptide is Nucleosome assembly protein 1;1 (NAP1;1) (Nicotiana tabacum (Common tobacco)).